The primary structure comprises 475 residues: Aspartyl/glutamyl-tRNA(Asn/Gln) amidotransferase subunit B (475 aa).

This sequence belongs to the GatB/GatE family. GatB subfamily. In terms of assembly, heterotrimer of A, B and C subunits.

The enzyme catalyses L-glutamyl-tRNA(Gln) + L-glutamine + ATP + H2O = L-glutaminyl-tRNA(Gln) + L-glutamate + ADP + phosphate + H(+). The catalysed reaction is L-aspartyl-tRNA(Asn) + L-glutamine + ATP + H2O = L-asparaginyl-tRNA(Asn) + L-glutamate + ADP + phosphate + 2 H(+). Allows the formation of correctly charged Asn-tRNA(Asn) or Gln-tRNA(Gln) through the transamidation of misacylated Asp-tRNA(Asn) or Glu-tRNA(Gln) in organisms which lack either or both of asparaginyl-tRNA or glutaminyl-tRNA synthetases. The reaction takes place in the presence of glutamine and ATP through an activated phospho-Asp-tRNA(Asn) or phospho-Glu-tRNA(Gln). This is Aspartyl/glutamyl-tRNA(Asn/Gln) amidotransferase subunit B from Bacillus thuringiensis subsp. konkukian (strain 97-27).